The primary structure comprises 674 residues: CLK4-associating serine/arginine rich protein (674 aa).

A Phosphoserine modification is found at S101. Disordered regions lie at residues 171 to 232 and 258 to 674; these read TVAE…GMAD and EKAM…HYRH. Residues 182–214 show a composition bias toward acidic residues; that stretch reads PEEEESAAEEESNSDEDEVIPDIDVEVDVDELN. Residues 265 to 283 are compositionally biased toward basic residues; the sequence is RRSRRQRREFREKRLRGRK. 2 positions are modified to phosphoserine: S285 and S294. The span at 290–313 shows a compositional bias: basic and acidic residues; sequence ARRDSPTYDPYKRSPSESSSESRS. Residue T327 is modified to Phosphothreonine. Residues S331 and S335 each carry the phosphoserine modification. A compositionally biased stretch (pro residues) spans 356 to 365; the sequence is PPAPPQPGGP. The span at 378 to 399 shows a compositional bias: low complexity; it reads SSSSSSSSASRTSSSRSSSRSS. Composition is skewed to basic residues over residues 411 to 443 and 481 to 492; these read SGRHARSRSRSWSRSRSRSRRYSRSRSRGRRHS and RGGRGLRHHSSS. 2 stretches are compositionally biased toward low complexity: residues 493–506 and 514–532; these read RSRSSWSLSPSRSR and HSPSPSQSRSRSRSRSQSP. The residue at position 547 (S547) is a Phosphoserine. T573 carries the post-translational modification Phosphothreonine. The stretch at 585 to 647 forms a coiled coil; sequence ALNRQFKADK…ERQYSRQSRS (63 aa). Composition is skewed to basic and acidic residues over residues 590–617 and 625–641; these read FKADKKAAQEKMIQQEHERQEREDELRA and KERERREKEREEWERQY. Low complexity predominate over residues 642–651; the sequence is SRQSRSPSPR. Over residues 659–674 the composition is skewed to basic residues; that stretch reads SRRRSRSRSRSPHYRH.

Belongs to the splicing factor SR family. As to quaternary structure, probably interacts with CLK4. In terms of processing, phosphorylated in vitro by CLK4.

The protein localises to the nucleus. Probably functions as an alternative splicing regulator. May regulate the mRNA splicing of genes such as CLK1. May act by regulating members of the CLK kinase family. This is CLK4-associating serine/arginine rich protein (CLASRP) from Homo sapiens (Human).